The sequence spans 202 residues: Small ribosomal subunit protein uS4 (202 aa).

Residues 93 to 156 (RRLDNMVYRL…KDLKIISEAV (64 aa)) form the S4 RNA-binding domain.

This sequence belongs to the universal ribosomal protein uS4 family. Part of the 30S ribosomal subunit. Contacts protein S5. The interaction surface between S4 and S5 is involved in control of translational fidelity.

One of the primary rRNA binding proteins, it binds directly to 16S rRNA where it nucleates assembly of the body of the 30S subunit. In terms of biological role, with S5 and S12 plays an important role in translational accuracy. The sequence is that of Small ribosomal subunit protein uS4 from Pediococcus pentosaceus (strain ATCC 25745 / CCUG 21536 / LMG 10740 / 183-1w).